The primary structure comprises 375 residues: 23S rRNA (uracil(747)-C(5))-methyltransferase RlmC (375 aa).

C3, C11, C14, and C87 together coordinate [4Fe-4S] cluster. Q212, F241, E262, and N307 together coordinate S-adenosyl-L-methionine. C334 serves as the catalytic Nucleophile.

This sequence belongs to the class I-like SAM-binding methyltransferase superfamily. RNA M5U methyltransferase family. RlmC subfamily.

The enzyme catalyses uridine(747) in 23S rRNA + S-adenosyl-L-methionine = 5-methyluridine(747) in 23S rRNA + S-adenosyl-L-homocysteine + H(+). Catalyzes the formation of 5-methyl-uridine at position 747 (m5U747) in 23S rRNA. This chain is 23S rRNA (uracil(747)-C(5))-methyltransferase RlmC, found in Escherichia coli (strain SMS-3-5 / SECEC).